Here is a 496-residue protein sequence, read N- to C-terminus: Apulose kinase (496 aa).

Residues 13-15 (TTN), Thr-267, Gly-308, and 408-412 (GATQN) each bind ATP.

The protein belongs to the FGGY kinase family.

The catalysed reaction is apulose + ATP = apulose 4-phosphate + ADP + H(+). Its pathway is carbohydrate metabolism. Involved in catabolism of D-apiose. Catalyzes phosphorylation of apulose to form apulose 4-phosphate. The sequence is that of Apulose kinase from Pectobacterium atrosepticum (strain SCRI 1043 / ATCC BAA-672) (Erwinia carotovora subsp. atroseptica).